The chain runs to 1203 residues: DNA-directed RNA polymerase subunit beta' (1203 aa).

Positions 60, 62, 75, and 78 each coordinate Zn(2+). 3 residues coordinate Mg(2+): Asp449, Asp451, and Asp453. Zn(2+) contacts are provided by Cys818, Cys892, Cys899, and Cys902.

This sequence belongs to the RNA polymerase beta' chain family. The RNAP catalytic core consists of 2 alpha, 1 beta, 1 beta' and 1 omega subunit. When a sigma factor is associated with the core the holoenzyme is formed, which can initiate transcription. Mg(2+) serves as cofactor. It depends on Zn(2+) as a cofactor.

It catalyses the reaction RNA(n) + a ribonucleoside 5'-triphosphate = RNA(n+1) + diphosphate. In terms of biological role, DNA-dependent RNA polymerase catalyzes the transcription of DNA into RNA using the four ribonucleoside triphosphates as substrates. The protein is DNA-directed RNA polymerase subunit beta' of Bacillus cereus (strain ZK / E33L).